Reading from the N-terminus, the 311-residue chain is MFYHNKSIFHPVTFFLIGIPGLEDFHMWISGPFCSVYLVALLGNATILLVIKVEQTLREPMFYFLAILSTIDLALSTTSVPRMLGIFWFDAHEINYGACVAQMFLIHAFTGMEAEVLLAMAFDRYVAVCAPLHYATILTSQVLVGISMCIVIRPVLLTLPMVYLIYRLPFCQAHIIAHSYCEHMGIAKLSCGNIRINGIYGLFVVSFFVLNLVLIGISYVYILRAVFRLPSHDAQLKALSTCGAHVGVICVFYIPSVFSFLTHRFGHQIPGYIHILVANLYLIIPPSLNPIIYGVRTKQIRERVLYVFTKK.

Residues 1–27 (MFYHNKSIFHPVTFFLIGIPGLEDFHM) are Extracellular-facing. A glycan (N-linked (GlcNAc...) asparagine) is linked at N5. Residues 28-48 (WISGPFCSVYLVALLGNATIL) traverse the membrane as a helical segment. Residues 49–56 (LVIKVEQT) are Cytoplasmic-facing. Residues 57–77 (LREPMFYFLAILSTIDLALST) form a helical membrane-spanning segment. Residues 78–101 (TSVPRMLGIFWFDAHEINYGACVA) are Extracellular-facing. A disulfide bridge connects residues C99 and C191. Residues 102–122 (QMFLIHAFTGMEAEVLLAMAF) traverse the membrane as a helical segment. Over 123 to 141 (DRYVAVCAPLHYATILTSQ) the chain is Cytoplasmic. A helical transmembrane segment spans residues 142–162 (VLVGISMCIVIRPVLLTLPMV). Topologically, residues 163 to 198 (YLIYRLPFCQAHIIAHSYCEHMGIAKLSCGNIRING) are extracellular. The helical transmembrane segment at 199-218 (IYGLFVVSFFVLNLVLIGIS) threads the bilayer. Topologically, residues 219-238 (YVYILRAVFRLPSHDAQLKA) are cytoplasmic. The chain crosses the membrane as a helical span at residues 239–259 (LSTCGAHVGVICVFYIPSVFS). Residues 260–274 (FLTHRFGHQIPGYIH) are Extracellular-facing. Residues 275-295 (ILVANLYLIIPPSLNPIIYGV) traverse the membrane as a helical segment. Topologically, residues 296–311 (RTKQIRERVLYVFTKK) are cytoplasmic.

This sequence belongs to the G-protein coupled receptor 1 family.

It localises to the cell membrane. Its function is as follows. Odorant receptor. The sequence is that of Olfactory receptor 52J3 (OR52J3) from Homo sapiens (Human).